Reading from the N-terminus, the 264-residue chain is Tryptophan synthase alpha chain (264 aa).

Active-site proton acceptor residues include E49 and D60.

This sequence belongs to the TrpA family. In terms of assembly, tetramer of two alpha and two beta chains.

The catalysed reaction is (1S,2R)-1-C-(indol-3-yl)glycerol 3-phosphate + L-serine = D-glyceraldehyde 3-phosphate + L-tryptophan + H2O. The protein operates within amino-acid biosynthesis; L-tryptophan biosynthesis; L-tryptophan from chorismate: step 5/5. Its function is as follows. The alpha subunit is responsible for the aldol cleavage of indoleglycerol phosphate to indole and glyceraldehyde 3-phosphate. This Geotalea daltonii (strain DSM 22248 / JCM 15807 / FRC-32) (Geobacter daltonii) protein is Tryptophan synthase alpha chain.